The primary structure comprises 290 residues: Protein-lysine methyltransferase METTL21E (290 aa).

Residues Trp-96, 124–126 (GAG), Asp-145, Trp-176, and Ala-197 contribute to the S-adenosyl-L-methionine site.

Belongs to the methyltransferase superfamily. METTL21 family.

Functionally, protein-lysine methyltransferase. The chain is Protein-lysine methyltransferase METTL21E (METTL21E) from Bos taurus (Bovine).